A 222-amino-acid polypeptide reads, in one-letter code: Exosome complex component Rrp4 (222 aa).

The region spanning 63-131 (GDLVIGRVTG…EINRVKLTLR (69 aa)) is the S1 motif domain.

It belongs to the RRP4 family. As to quaternary structure, component of the archaeal exosome complex. Forms a trimer of Rrp4 and/or Csl4 subunits. The trimer associates with a hexameric ring-like arrangement composed of 3 Rrp41-Rrp42 heterodimers.

It localises to the cytoplasm. Non-catalytic component of the exosome, which is a complex involved in RNA degradation. Increases the RNA binding and the efficiency of RNA degradation. Confers strong poly(A) specificity to the exosome. The protein is Exosome complex component Rrp4 of Methanosphaera stadtmanae (strain ATCC 43021 / DSM 3091 / JCM 11832 / MCB-3).